Reading from the N-terminus, the 373-residue chain is 4-hydroxy-3-methylbut-2-en-1-yl diphosphate synthase (flavodoxin) (373 aa).

Residues C270, C273, C305, and E312 each coordinate [4Fe-4S] cluster.

The protein belongs to the IspG family. [4Fe-4S] cluster serves as cofactor.

The enzyme catalyses (2E)-4-hydroxy-3-methylbut-2-enyl diphosphate + oxidized [flavodoxin] + H2O + 2 H(+) = 2-C-methyl-D-erythritol 2,4-cyclic diphosphate + reduced [flavodoxin]. It participates in isoprenoid biosynthesis; isopentenyl diphosphate biosynthesis via DXP pathway; isopentenyl diphosphate from 1-deoxy-D-xylulose 5-phosphate: step 5/6. Converts 2C-methyl-D-erythritol 2,4-cyclodiphosphate (ME-2,4cPP) into 1-hydroxy-2-methyl-2-(E)-butenyl 4-diphosphate. This is 4-hydroxy-3-methylbut-2-en-1-yl diphosphate synthase (flavodoxin) from Klebsiella pneumoniae subsp. pneumoniae (strain ATCC 700721 / MGH 78578).